A 570-amino-acid chain; its full sequence is Proline--tRNA ligase (570 aa).

This sequence belongs to the class-II aminoacyl-tRNA synthetase family. ProS type 1 subfamily. In terms of assembly, homodimer.

The protein resides in the cytoplasm. It catalyses the reaction tRNA(Pro) + L-proline + ATP = L-prolyl-tRNA(Pro) + AMP + diphosphate. Its function is as follows. Catalyzes the attachment of proline to tRNA(Pro) in a two-step reaction: proline is first activated by ATP to form Pro-AMP and then transferred to the acceptor end of tRNA(Pro). As ProRS can inadvertently accommodate and process non-cognate amino acids such as alanine and cysteine, to avoid such errors it has two additional distinct editing activities against alanine. One activity is designated as 'pretransfer' editing and involves the tRNA(Pro)-independent hydrolysis of activated Ala-AMP. The other activity is designated 'posttransfer' editing and involves deacylation of mischarged Ala-tRNA(Pro). The misacylated Cys-tRNA(Pro) is not edited by ProRS. This Syntrophomonas wolfei subsp. wolfei (strain DSM 2245B / Goettingen) protein is Proline--tRNA ligase.